The chain runs to 494 residues: Ketol-acid reductoisomerase (NADP(+)) (494 aa).

Residues 14-208 (LDQLGRCRFM…GGHRAGCLES (195 aa)) form the KARI N-terminal Rossmann domain. NADP(+) is bound by residues 45 to 48 (CGAQ), R68, R76, S78, and 108 to 110 (DKQ). Residue H132 is part of the active site. Position 158 (G158) interacts with NADP(+). KARI C-terminal knotted domains follow at residues 209 to 344 (SFVA…NYPA) and 345 to 487 (SDVE…MSDM). The Mg(2+) site is built by D217, E221, E389, and E393. S414 is a binding site for substrate.

It belongs to the ketol-acid reductoisomerase family. The cofactor is Mg(2+).

The enzyme catalyses (2R)-2,3-dihydroxy-3-methylbutanoate + NADP(+) = (2S)-2-acetolactate + NADPH + H(+). It catalyses the reaction (2R,3R)-2,3-dihydroxy-3-methylpentanoate + NADP(+) = (S)-2-ethyl-2-hydroxy-3-oxobutanoate + NADPH + H(+). Its pathway is amino-acid biosynthesis; L-isoleucine biosynthesis; L-isoleucine from 2-oxobutanoate: step 2/4. It functions in the pathway amino-acid biosynthesis; L-valine biosynthesis; L-valine from pyruvate: step 2/4. Involved in the biosynthesis of branched-chain amino acids (BCAA). Catalyzes an alkyl-migration followed by a ketol-acid reduction of (S)-2-acetolactate (S2AL) to yield (R)-2,3-dihydroxy-isovalerate. In the isomerase reaction, S2AL is rearranged via a Mg-dependent methyl migration to produce 3-hydroxy-3-methyl-2-ketobutyrate (HMKB). In the reductase reaction, this 2-ketoacid undergoes a metal-dependent reduction by NADPH to yield (R)-2,3-dihydroxy-isovalerate. The protein is Ketol-acid reductoisomerase (NADP(+)) of Vibrio atlanticus (strain LGP32) (Vibrio splendidus (strain Mel32)).